Reading from the N-terminus, the 264-residue chain is 5'-nucleotidase SurE (264 aa).

4 residues coordinate a divalent metal cation: D10, D11, S43, and N99.

Belongs to the SurE nucleotidase family. It depends on a divalent metal cation as a cofactor.

Its subcellular location is the cytoplasm. The catalysed reaction is a ribonucleoside 5'-phosphate + H2O = a ribonucleoside + phosphate. In terms of biological role, nucleotidase that shows phosphatase activity on nucleoside 5'-monophosphates. In Methanococcus maripaludis (strain C5 / ATCC BAA-1333), this protein is 5'-nucleotidase SurE.